A 273-amino-acid chain; its full sequence is Protein BRANCHLESS TRICHOME (273 aa).

A compositionally biased stretch (polar residues) spans 1–12 (MKDMKMQSSPET). A disordered region spans residues 1–30 (MKDMKMQSSPETMMTRIPTPDPHSTGVRED). Residues 69–199 (IKVFMESELG…GERERNRMMK (131 aa)) adopt a coiled-coil conformation.

In terms of assembly, interacts with STI.

Acts as a key regulator of trichome branching. Could participate with STI in the same pathway. Also plays a role in integrating endoreplication levels with cell shape. This is Protein BRANCHLESS TRICHOME (BLT) from Arabidopsis thaliana (Mouse-ear cress).